The chain runs to 356 residues: Sporulation minus regulator 1 (356 aa).

A DNA-binding region spans residues 183–199 (HPLRQLPGNPWHKFFGN).

This sequence to N.crassa mta-2.

It is found in the nucleus. In terms of biological role, transcriptional activator that is required for post-fertilization events. It is required for the developmental events that occur in the female organ after fertilization. The chain is Sporulation minus regulator 1 (SMR1) from Podospora anserina (Pleurage anserina).